A 185-amino-acid chain; its full sequence is Coiled-coil domain-containing protein 32 (185 aa).

Positions Leu-78–Lys-98 form a coiled coil. A disordered region spans residues Ile-159–Gln-185.

Interacts with AP2S1; the interaction is direct and mediates association with adaptor protein complex 2 (AP-2).

It localises to the membrane. The protein localises to the coated pit. Functionally, regulates clathrin-mediated endocytsois of cargos such as transferrin probably through the association and modulation of adaptor protein complex 2 (AP-2). Has a role in ciliogenesis. Required for proper cephalic and left/right axis development. The protein is Coiled-coil domain-containing protein 32 of Homo sapiens (Human).